Consider the following 179-residue polypeptide: Large ribosomal subunit protein uL5c (179 aa).

This sequence belongs to the universal ribosomal protein uL5 family. As to quaternary structure, part of the 50S ribosomal subunit; contacts the 5S rRNA.

It is found in the plastid. The protein resides in the chloroplast. Binds 5S rRNA, forms part of the central protuberance of the 50S subunit. The chain is Large ribosomal subunit protein uL5c (rpl5) from Gracilaria tenuistipitata var. liui (Red alga).